We begin with the raw amino-acid sequence, 727 residues long: E3 ubiquitin-protein ligase LRSAM1 (727 aa).

6 LRR repeats span residues 30–51 (ADDILDISKCELSEIPFGAFAT), 56–77 (QKKVLIVHTNHLTSLLPKSCSL), 82–103 (TIKVLDLHENQLTALPDDMGQL), 105–126 (VLQVLNVERNQLTHLPRSIGNL), 128–150 (QLQTLNVKDNKLKELPDTLGELR), and 151–172 (SLRTLDISENEIQRLPQMLAHV). Positions 227–248 (GAENTQDSPDGPASRFSREEAE) are disordered. S234 bears the Phosphoserine mark. Coiled coils occupy residues 241 to 382 (RFSR…NLRQ) and 469 to 547 (RQIR…QENY). The 64-residue stretch at 569 to 632 (GMERRLVALL…LRRAQDLLAV (64 aa)) folds into the SAM domain. The residue at position 604 (S604) is a Phosphoserine. Short sequence motifs (PTAP motif) lie at residues 653–656 (PTAP) and 665–668 (PSAP). The segment at 679–714 (CVVCLEREAQMVFLTCGHVCCCQQCCQPLRTCPLCR) adopts an RING-type zinc-finger fold.

Interacts with TSG101. Interacts with PHF23. Interacts with FUS. In terms of processing, ubiquitination promoted by PHF23 leads to proteasomal degradation. As to expression, widely expressed.

The protein resides in the cytoplasm. The catalysed reaction is S-ubiquitinyl-[E2 ubiquitin-conjugating enzyme]-L-cysteine + [acceptor protein]-L-lysine = [E2 ubiquitin-conjugating enzyme]-L-cysteine + N(6)-ubiquitinyl-[acceptor protein]-L-lysine.. It participates in protein modification; protein ubiquitination. E3 ubiquitin-protein ligase that mediates monoubiquitination of TSG101 at multiple sites, leading to inactivate the ability of TSG101 to sort endocytic (EGF receptors) and exocytic (viral proteins) cargos. Bacterial recognition protein that defends the cytoplasm from invasive pathogens. Localizes to several intracellular bacterial pathogens and generates the bacteria-associated ubiquitin signal leading to autophagy-mediated intracellular bacteria degradation (xenophagy). The polypeptide is E3 ubiquitin-protein ligase LRSAM1 (Mus musculus (Mouse)).